Consider the following 431-residue polypeptide: Protein CLT2, chloroplastic (431 aa).

Residues 1–79 (MDTVLMATTP…PMRRPRFSVG (79 aa)) constitute a chloroplast transit peptide. The next 10 membrane-spanning stretches (helical) occupy residues 99–119 (VVIVALAVANRVLYKLALVPM), 122–142 (YPFFMAQLTTFGYVLIYFTIL), 163–183 (FAIIGFLEALGVATGMAAAAM), 188–208 (VIPILNQTYLVWQLLFALLIL), 212–232 (FLLNQIAGCLLVAVGVVVAVS), 244–264 (IGFLWPAVLVASAAFQAGASI), 284–304 (IFVVNSFGSGFQALFVFLLLP), 343–363 (ILPLLYISTNLAFNISLLHLV), 365–385 (ISSAIVSSLTMMLSVPLAVYI), and 403–423 (FTMGCIVLVLGLLLYNIPTTP).

The protein belongs to the CRT-like transporter family.

It localises to the plastid. The protein localises to the chloroplast membrane. Functionally, involved in thiol transport from the plastid to the cytosol. Transports probably both glutathione (GSH) and its precursor, gamma-glutamylcysteine (gamma-EC). In Arabidopsis thaliana (Mouse-ear cress), this protein is Protein CLT2, chloroplastic.